Consider the following 605-residue polypeptide: Glutamine--fructose-6-phosphate aminotransferase [isomerizing] (605 aa).

The Nucleophile; for GATase activity role is filled by C2. Positions 2-219 constitute a Glutamine amidotransferase type-2 domain; that stretch reads CGIVGVVGSK…DKELVVLTKD (218 aa). SIS domains are found at residues 285–424 and 457–595; these read IIKG…AEGE and VADL…VDKP. Residue K600 is the For Fru-6P isomerization activity of the active site.

In terms of assembly, homodimer.

Its subcellular location is the cytoplasm. The catalysed reaction is D-fructose 6-phosphate + L-glutamine = D-glucosamine 6-phosphate + L-glutamate. Functionally, catalyzes the first step in hexosamine metabolism, converting fructose-6P into glucosamine-6P using glutamine as a nitrogen source. This Lactococcus lactis subsp. lactis (strain IL1403) (Streptococcus lactis) protein is Glutamine--fructose-6-phosphate aminotransferase [isomerizing].